Here is a 150-residue protein sequence, read N- to C-terminus: Large ribosomal subunit protein bL9 (150 aa).

The protein belongs to the bacterial ribosomal protein bL9 family.

Binds to the 23S rRNA. This Corynebacterium kroppenstedtii (strain DSM 44385 / JCM 11950 / CIP 105744 / CCUG 35717) protein is Large ribosomal subunit protein bL9.